The following is a 33-amino-acid chain: U-limacoditoxin(13)-As11 (33 aa).

Positions 1 to 19 (MFKLLLVLALTMLAQSALA) are cleaved as a signal peptide. Position 32 is a phenylalanine amide (F32).

This sequence belongs to the FARP (FMRFamide related peptide) family. Expressed by the venom secretory cell of the spine. The spine is a cuticular structure containing a single large nucleated venom-secreting cell at its base. It is an independent unit capable of producing, storing and injecting venom. On the back of A.stimulea caterpillars, spines are grouped together by 50 to 100 to form scoli, of which there are eight.

It is found in the secreted. Is toxic when injected into Drosophila melanogaster. Also shows a low anthelmintic activity against the parasitic nematode H.contortus (drug susceptible Kirby isolate). The polypeptide is U-limacoditoxin(13)-As11 (Acharia stimulea (Saddleback caterpillar moth)).